A 131-amino-acid chain; its full sequence is Fluoride-specific ion channel FluC 1 (131 aa).

The next 3 helical transmembrane spans lie at 38–58 (FPLS…IAMM), 69–89 (TVMM…TALN), and 108–128 (IATV…ALLA). Na(+) is bound by residues Gly-79 and Ser-82.

The protein belongs to the fluoride channel Fluc/FEX (TC 1.A.43) family.

It is found in the cell membrane. It carries out the reaction fluoride(in) = fluoride(out). With respect to regulation, na(+) is not transported, but it plays an essential structural role and its presence is essential for fluoride channel function. Functionally, fluoride-specific ion channel. Important for reducing fluoride concentration in the cell, thus reducing its toxicity. The protein is Fluoride-specific ion channel FluC 1 of Bifidobacterium longum (strain NCC 2705).